An 87-amino-acid chain; its full sequence is Small ribosomal subunit protein uS15c (87 aa).

This sequence belongs to the universal ribosomal protein uS15 family. In terms of assembly, part of the 30S ribosomal subunit.

The protein resides in the plastid. The protein localises to the chloroplast. The protein is Small ribosomal subunit protein uS15c (rps15) of Solanum bulbocastanum (Wild potato).